A 160-amino-acid polypeptide reads, in one-letter code: Serine-protein kinase RsbW (160 aa).

The protein belongs to the anti-sigma-factor family.

It catalyses the reaction L-seryl-[protein] + ATP = O-phospho-L-seryl-[protein] + ADP + H(+). The enzyme catalyses L-threonyl-[protein] + ATP = O-phospho-L-threonyl-[protein] + ADP + H(+). Negative regulator of sigma-B activity. Phosphorylates and inactivates its specific antagonist protein, RsbV. Upon phosphorylation of RsbV, RsbW is released and binds to sigma-B, thereby blocking its ability to form an RNA polymerase holoenzyme (E-sigma-B). This is Serine-protein kinase RsbW from Bacillus velezensis (strain DSM 23117 / BGSC 10A6 / LMG 26770 / FZB42) (Bacillus amyloliquefaciens subsp. plantarum).